Reading from the N-terminus, the 312-residue chain is Ribosomal RNA small subunit methyltransferase H (312 aa).

Residues 35–37 (GGH), aspartate 55, phenylalanine 85, aspartate 101, and glutamine 108 contribute to the S-adenosyl-L-methionine site.

This sequence belongs to the methyltransferase superfamily. RsmH family.

Its subcellular location is the cytoplasm. It catalyses the reaction cytidine(1402) in 16S rRNA + S-adenosyl-L-methionine = N(4)-methylcytidine(1402) in 16S rRNA + S-adenosyl-L-homocysteine + H(+). Functionally, specifically methylates the N4 position of cytidine in position 1402 (C1402) of 16S rRNA. The sequence is that of Ribosomal RNA small subunit methyltransferase H from Buchnera aphidicola subsp. Acyrthosiphon pisum (strain Tuc7).